Here is a 357-residue protein sequence, read N- to C-terminus: Cyclin-dependent kinase-like 1 (357 aa).

In terms of domain architecture, Protein kinase spans 4–287 (YEKIGKIGEG…CEQLLHHPYF (284 aa)). ATP contacts are provided by residues 10–18 (IGEGSYGVV) and lysine 33. Positions 45 to 51 (KKIALRE) match the [NKR]KIAxRE motif. Aspartate 126 acts as the Proton acceptor in catalysis.

It belongs to the protein kinase superfamily. CMGC Ser/Thr protein kinase family. CDC2/CDKX subfamily. As to expression, highly expressed in kidney, and to a lower extent in ovary.

It localises to the cytoplasm. The protein localises to the nucleus. It carries out the reaction L-seryl-[protein] + ATP = O-phospho-L-seryl-[protein] + ADP + H(+). The enzyme catalyses L-threonyl-[protein] + ATP = O-phospho-L-threonyl-[protein] + ADP + H(+). The sequence is that of Cyclin-dependent kinase-like 1 from Homo sapiens (Human).